Here is a 123-residue protein sequence, read N- to C-terminus: Secreted LysM effector Lys1 (123 aa).

A signal peptide spans Met1–Ala20. The LysM domain maps to Lys72–Val118.

It belongs to the secreted LysM effector family.

Functionally, might have a role in sequestration of chitin oligosaccharides (breakdown products of fungal cell walls that are released during invasion and act as triggers of host immunity) to dampen host defense. The sequence is that of Secreted LysM effector Lys1 from Pochonia chlamydosporia (strain 123) (Metacordyceps chlamydosporia).